Here is a 594-residue protein sequence, read N- to C-terminus: Zinc finger protein 467 (594 aa).

Residues 1 to 86 form a disordered region; it reads MRETLEALNS…PQKAEPAGSV (86 aa). Residues 1–183 are interaction with STAT3; it reads MRETLEALNS…TLRLHQRLHR (183 aa). A compositionally biased stretch (polar residues) spans 31–47; that stretch reads SNAQEKMSSRGESTLHS. Positions 54–64 are enriched in basic and acidic residues; it reads PGQKEGIHTEQ. Residue lysine 97 forms a Glycyl lysine isopeptide (Lys-Gly) (interchain with G-Cter in SUMO2) linkage. C2H2-type zinc fingers lie at residues 160–182, 188–210, 216–238, 244–266, 272–294, 300–322, 355–377, 430–452, 458–480, 486–508, 514–536, and 542–564; these read YGCE…QRLH, CACP…QRSH, FPCS…LRTH, YPCA…QKTH, FPCT…QRIH, YQCT…QRVH, FACS…QSLH, FFCP…RRVH, FACA…SRAH, FACA…QAVH, HACA…QAIH, and FSCP…QRIH. The tract at residues 313–351 is disordered; sequence QHLVRHQRVHDAASRTRSSPDIPVAPHSPTASLTPSPPG. Lysine 368 is covalently cross-linked (Glycyl lysine isopeptide (Lys-Gly) (interchain with G-Cter in SUMO2)).

The protein belongs to the krueppel C2H2-type zinc-finger protein family. Interacts with STAT3. Enhances STAT3 activity by keeping it in the nucleus.

Its subcellular location is the nucleus. Transcription factor that promotes adipocyte differentiation and suppresses osteoblast differentiation in the bone marrow. Enhances the osteoclast-supporting ability of stromal cells. Binds with STAT3 the consensus sequence 5'-CTTCTGGGAAGA-3' of the acute phase response element (APRE). Transactivates several promoters including FOS, OSM and PPARG. Recruits a histone deacetylase complex. The polypeptide is Zinc finger protein 467 (Znf467) (Mus musculus (Mouse)).